We begin with the raw amino-acid sequence, 227 residues long: Thymidylate kinase (227 aa).

16–23 serves as a coordination point for ATP; the sequence is GIDGAGKT.

It belongs to the thymidylate kinase family.

The enzyme catalyses dTMP + ATP = dTDP + ADP. Its function is as follows. Phosphorylation of dTMP to form dTDP in both de novo and salvage pathways of dTTP synthesis. In Xanthomonas campestris pv. campestris (strain 8004), this protein is Thymidylate kinase.